A 418-amino-acid chain; its full sequence is 26S proteasome regulatory subunit 6B (418 aa).

At Met1 the chain carries N-acetylmethionine. Ser21 carries the post-translational modification Phosphoserine. Thr25 bears the Phosphothreonine mark. Position 28 is a phosphoserine (Ser28). 206-213 (GPPGCGKT) contacts ATP. N6-acetyllysine is present on residues Lys397 and Lys401.

Belongs to the AAA ATPase family. As to quaternary structure, component of the 19S proteasome regulatory particle complex. The 26S proteasome consists of a 20S core particle (CP) and two 19S regulatory subunits (RP). The regulatory particle is made of a lid composed of 9 subunits, a base containing 6 ATPases including PSMC4 and few additional components. Interacts with NR1I3. Interacts with PAAF1. Interacts with TRIM5. Interacts with ZFAND1.

It localises to the cytoplasm. Its subcellular location is the nucleus. Its function is as follows. Component of the 26S proteasome, a multiprotein complex involved in the ATP-dependent degradation of ubiquitinated proteins. This complex plays a key role in the maintenance of protein homeostasis by removing misfolded or damaged proteins, which could impair cellular functions, and by removing proteins whose functions are no longer required. Therefore, the proteasome participates in numerous cellular processes, including cell cycle progression, apoptosis, or DNA damage repair. PSMC4 belongs to the heterohexameric ring of AAA (ATPases associated with diverse cellular activities) proteins that unfolds ubiquitinated target proteins that are concurrently translocated into a proteolytic chamber and degraded into peptides. The polypeptide is 26S proteasome regulatory subunit 6B (PSMC4) (Bos taurus (Bovine)).